The primary structure comprises 414 residues: 3-oxoacyl-[acyl-carrier-protein] synthase 2 (414 aa).

The Ketosynthase family 3 (KS3) domain occupies 3–411 (KRRVVITGLG…GTNGTLVLSR (409 aa)). Catalysis depends on for beta-ketoacyl synthase activity residues cysteine 164, histidine 304, and histidine 341.

The protein belongs to the thiolase-like superfamily. Beta-ketoacyl-ACP synthases family. In terms of assembly, homodimer.

The enzyme catalyses a fatty acyl-[ACP] + malonyl-[ACP] + H(+) = a 3-oxoacyl-[ACP] + holo-[ACP] + CO2. It catalyses the reaction (9Z)-hexadecenoyl-[ACP] + malonyl-[ACP] + H(+) = 3-oxo-(11Z)-octadecenoyl-[ACP] + holo-[ACP] + CO2. It participates in lipid metabolism; fatty acid biosynthesis. Its function is as follows. Involved in the type II fatty acid elongation cycle. Catalyzes the elongation of a wide range of acyl-ACP by the addition of two carbons from malonyl-ACP to an acyl acceptor. Can efficiently catalyze the conversion of palmitoleoyl-ACP (cis-hexadec-9-enoyl-ACP) to cis-vaccenoyl-ACP (cis-octadec-11-enoyl-ACP), an essential step in the thermal regulation of fatty acid composition. The polypeptide is 3-oxoacyl-[acyl-carrier-protein] synthase 2 (fabF) (Coxiella burnetii (strain RSA 493 / Nine Mile phase I)).